A 131-amino-acid chain; its full sequence is Glycine cleavage system H protein (131 aa).

One can recognise a Lipoyl-binding domain in the interval 24–106 (VYCVGITEHA…YTDGWLFKIK (83 aa)). K65 is subject to N6-lipoyllysine.

Belongs to the GcvH family. In terms of assembly, the glycine cleavage system is composed of four proteins: P, T, L and H. (R)-lipoate is required as a cofactor.

The glycine cleavage system catalyzes the degradation of glycine. The H protein shuttles the methylamine group of glycine from the P protein to the T protein. The protein is Glycine cleavage system H protein of Sodalis glossinidius (strain morsitans).